Here is a 534-residue protein sequence, read N- to C-terminus: CTP synthase (534 aa).

Residues 1 to 266 (MKQKFIFVTG…DELIVARLGL (266 aa)) form an amidoligase domain region. Residue Ser-14 coordinates CTP. Residue Ser-14 participates in UTP binding. ATP-binding positions include 15–20 (SIGKGL) and Asp-72. Asp-72 and Glu-140 together coordinate Mg(2+). CTP contacts are provided by residues 147-149 (DIE), 187-192 (KSKPTQ), and Lys-223. UTP is bound by residues 187-192 (KSKPTQ) and Lys-223. Positions 291 to 534 (KIGVVGKYVD…HFVKASLKKK (244 aa)) constitute a Glutamine amidotransferase type-1 domain. Gly-353 contacts L-glutamine. Cys-380 (nucleophile; for glutamine hydrolysis) is an active-site residue. Residues 381 to 384 (FGMQ), Glu-404, and Arg-464 each bind L-glutamine. Residues His-509 and Glu-511 contribute to the active site.

Belongs to the CTP synthase family. Homotetramer.

It catalyses the reaction UTP + L-glutamine + ATP + H2O = CTP + L-glutamate + ADP + phosphate + 2 H(+). The catalysed reaction is L-glutamine + H2O = L-glutamate + NH4(+). It carries out the reaction UTP + NH4(+) + ATP = CTP + ADP + phosphate + 2 H(+). It functions in the pathway pyrimidine metabolism; CTP biosynthesis via de novo pathway; CTP from UDP: step 2/2. Allosterically activated by GTP, when glutamine is the substrate; GTP has no effect on the reaction when ammonia is the substrate. The allosteric effector GTP functions by stabilizing the protein conformation that binds the tetrahedral intermediate(s) formed during glutamine hydrolysis. Inhibited by the product CTP, via allosteric rather than competitive inhibition. Catalyzes the ATP-dependent amination of UTP to CTP with either L-glutamine or ammonia as the source of nitrogen. Regulates intracellular CTP levels through interactions with the four ribonucleotide triphosphates. This is CTP synthase from Bdellovibrio bacteriovorus (strain ATCC 15356 / DSM 50701 / NCIMB 9529 / HD100).